Consider the following 1399-residue polypeptide: DNA-directed RNA polymerase subunit beta' (1399 aa).

Cys70, Cys72, Cys85, and Cys88 together coordinate Zn(2+). Asp460, Asp462, and Asp464 together coordinate Mg(2+). Zn(2+) contacts are provided by Cys814, Cys888, Cys895, and Cys898.

This sequence belongs to the RNA polymerase beta' chain family. The RNAP catalytic core consists of 2 alpha, 1 beta, 1 beta' and 1 omega subunit. When a sigma factor is associated with the core the holoenzyme is formed, which can initiate transcription. Mg(2+) is required as a cofactor. It depends on Zn(2+) as a cofactor.

The catalysed reaction is RNA(n) + a ribonucleoside 5'-triphosphate = RNA(n+1) + diphosphate. In terms of biological role, DNA-dependent RNA polymerase catalyzes the transcription of DNA into RNA using the four ribonucleoside triphosphates as substrates. In Pseudomonas putida (strain ATCC 700007 / DSM 6899 / JCM 31910 / BCRC 17059 / LMG 24140 / F1), this protein is DNA-directed RNA polymerase subunit beta'.